We begin with the raw amino-acid sequence, 342 residues long: UV excision repair protein RAD23 homolog (342 aa).

The 76-residue stretch at 1–76 (MKVTIKNINK…IVMMIKKPRE (76 aa)) folds into the Ubiquitin-like domain. Over residues 77-151 (APATTPAPST…TPGSTSTTSP (75 aa)) the composition is skewed to low complexity. The disordered stretch occupies residues 77–157 (APATTPAPST…TTSPQQSSDF (81 aa)). UBA domains are found at residues 161–201 (TELE…LVSG) and 297–338 (QEES…LFET).

Belongs to the RAD23 family.

It localises to the nucleus. It is found in the cytoplasm. Functionally, may play a role both in proteasomal degradation of misfolded proteins and DNA repair. In Dictyostelium discoideum (Social amoeba), this protein is UV excision repair protein RAD23 homolog (rcbA).